The sequence spans 89 residues: Protein RALF-like 5 (89 aa).

The first 25 residues, 1–25 (MLKAQVFMFVTVLVFVCVFINSNDA), serve as a signal peptide directing secretion. 2 disulfide bridges follow: cysteine 39-cysteine 48 and cysteine 61-cysteine 67.

The protein belongs to the plant rapid alkalinization factor (RALF) family.

It is found in the secreted. In terms of biological role, cell signaling peptide that may regulate plant stress, growth, and development. Mediates a rapid alkalinization of extracellular space by mediating a transient increase in the cytoplasmic Ca(2+) concentration leading to a calcium-dependent signaling events through a cell surface receptor and a concomitant activation of some intracellular mitogen-activated protein kinases. The chain is Protein RALF-like 5 (RALFL5) from Arabidopsis thaliana (Mouse-ear cress).